The following is a 419-amino-acid chain: UDP-N-acetylglucosamine 1-carboxyvinyltransferase (419 aa).

22–23 is a phosphoenolpyruvate binding site; sequence KN. Residue R91 coordinates UDP-N-acetyl-alpha-D-glucosamine. The active-site Proton donor is C115. Residue C115 is modified to 2-(S-cysteinyl)pyruvic acid O-phosphothioketal. UDP-N-acetyl-alpha-D-glucosamine is bound by residues 120–124, 160–163, D305, and V327; these read RPVDL and KVSV.

The protein belongs to the EPSP synthase family. MurA subfamily.

It is found in the cytoplasm. The catalysed reaction is phosphoenolpyruvate + UDP-N-acetyl-alpha-D-glucosamine = UDP-N-acetyl-3-O-(1-carboxyvinyl)-alpha-D-glucosamine + phosphate. The protein operates within cell wall biogenesis; peptidoglycan biosynthesis. Functionally, cell wall formation. Adds enolpyruvyl to UDP-N-acetylglucosamine. This chain is UDP-N-acetylglucosamine 1-carboxyvinyltransferase, found in Shigella sonnei (strain Ss046).